The primary structure comprises 137 residues: MERTLAIIKPDAFAAGHAGGILARIYEEGFRVIGMKKLALSEKQAAGFYYVHEGKPFFDDLKGFMSSGPCVVMVLEADGAIRKWRDLMGATNPADAAAGTLRKEFGTSLGRNAVHGSDAPETAAFEVGYFFAGLDLL.

ATP contacts are provided by K9, F57, R85, T91, R102, and N112. H115 acts as the Pros-phosphohistidine intermediate in catalysis.

The protein belongs to the NDK family. Homotetramer. Requires Mg(2+) as cofactor.

It localises to the cytoplasm. It carries out the reaction a 2'-deoxyribonucleoside 5'-diphosphate + ATP = a 2'-deoxyribonucleoside 5'-triphosphate + ADP. The enzyme catalyses a ribonucleoside 5'-diphosphate + ATP = a ribonucleoside 5'-triphosphate + ADP. Functionally, major role in the synthesis of nucleoside triphosphates other than ATP. The ATP gamma phosphate is transferred to the NDP beta phosphate via a ping-pong mechanism, using a phosphorylated active-site intermediate. This chain is Nucleoside diphosphate kinase, found in Syntrophotalea carbinolica (strain DSM 2380 / NBRC 103641 / GraBd1) (Pelobacter carbinolicus).